A 631-amino-acid polypeptide reads, in one-letter code: MSRQHAAYIDYALNRMKKMPIEMLGSDTITLKPYQHFVAKVFLGLDTMHSILLFHDTGVGKTITTVFILKHLKDIYTNWTILLLVKKALVEDPWMNTILKYSPEIIKNCIFINYDDKNFHNKFFTNIKTISSRSRVCVVLDECHNFISKSLIKEDGKQRPTKSVYNYLSKNISLNNNKMICLSATPIVNNVREFTMIVNLLRPKIIQFQSLFENKNLVNEKELIDKLGGICSYIVNDEFSIFDDVEGSQSFAKKTVYMHYVNMTKQQEIIYQKAKIAEIKSGIASFRIYRRMAATFSFDSFPDKKKKTIDEITLELGALYKDFVNYVNKKSFSNNAIKLFKSGKGLTGDSNPLDISLLSELRQKSCKFTEVCLKILASPGKCLVFEPFINQSGIEVLLVYFSVFCITSVEFSSRTKDTRIKNVFEFNKESNTNGEQIKVCVFSISGGEGISFFSINDIFILDMTWNEASLKQIVGRAIRLNSHANTPPNRRYVNVYFIIARLSSGEPTVDEDLINIIKTKSKEFFQLFKVFKESSIEWIYKNKKDFYPINDESGWRALTSRVVDVNVKSKRTVQLAQGQNIWFSNSSRMVTIHKGFKTSDGKIFDVDGNFIQNMPINPIIKIHNDKLVYII.

The region spanning 42-204 (FLGLDTMHSI…TMIVNLLRPK (163 aa)) is the Helicase ATP-binding domain. 55-62 (HDTGVGKT) contacts ATP. Positions 141–144 (DECH) match the DEXH box motif. A Helicase C-terminal domain is found at 367-536 (KFTEVCLKIL…LFKVFKESSI (170 aa)). Residues 457–524 (DIFILDMTWN…NIIKTKSKEF (68 aa)) form a binding to the cap-specific mRNA (nucleoside-2'-O-)-methyltransferase region.

The protein belongs to the helicase family. NPH I subfamily. Monomer. Interacts (via C-terminus) with RAP94 (via N-terminus). Interacts with the cap-specific mRNA (nucleoside-2'-O-)-methyltransferase.

Its subcellular location is the virion. The enzyme catalyses a ribonucleoside 5'-triphosphate + H2O = a ribonucleoside 5'-diphosphate + phosphate + H(+). In terms of biological role, DNA-dependent ATPase required for providing the needed energy to achieve the termination of early transcripts. Acts in concert with the RAP94 subunit of the virion RNA polymerase and the capping enzyme/VTF to catalyze release of UUUUUNU-containing nascent RNA from the elongation complex. NPH-I must bind ssDNA in order to exhibit ATPase activity. This chain is Nucleoside triphosphatase I (NPH1), found in Erythrocebus patas (Red guenon).